An 885-amino-acid polypeptide reads, in one-letter code: Phycobiliprotein ApcE (885 aa).

Position 185 (Cys-185) interacts with (2R,3E)-phycocyanobilin. 3 PBS-linker domains span residues 242 to 422 (DVQG…FRKV), 498 to 680 (KSIG…NSKK), and 694 to 871 (NSIQ…KQSS).

The protein belongs to the phycobilisome linker protein family. Post-translationally, contains one covalently linked bilin chromophore. This protein autochromophorylates (Potential).

The protein resides in the plastid. The protein localises to the chloroplast thylakoid membrane. In terms of biological role, this protein is postulated to act both as terminal energy acceptor and as a linker polypeptide that stabilizes the phycobilisome architecture. May have intrinsic bilin lyase activity. This chain is Phycobiliprotein ApcE (apcE), found in Aglaothamnion neglectum (Red alga).